The chain runs to 357 residues: Probable butyrate kinase 1 (357 aa).

The protein belongs to the acetokinase family.

Its subcellular location is the cytoplasm. The catalysed reaction is butanoate + ATP = butanoyl phosphate + ADP. The polypeptide is Probable butyrate kinase 1 (Thermotoga maritima (strain ATCC 43589 / DSM 3109 / JCM 10099 / NBRC 100826 / MSB8)).